Here is a 150-residue protein sequence, read N- to C-terminus: Lipoprotein signal peptidase (150 aa).

3 helical membrane passes run 5–25 (LSLV…NWVV), 59–79 (QQWF…WFLW), and 82–102 (MGQN…LGNF). Residues Asp-113 and Asp-129 contribute to the active site. Residues 124-144 (IFNIADILLSVGFVVLFIAIL) traverse the membrane as a helical segment.

This sequence belongs to the peptidase A8 family.

The protein resides in the cell membrane. It carries out the reaction Release of signal peptides from bacterial membrane prolipoproteins. Hydrolyzes -Xaa-Yaa-Zaa-|-(S,diacylglyceryl)Cys-, in which Xaa is hydrophobic (preferably Leu), and Yaa (Ala or Ser) and Zaa (Gly or Ala) have small, neutral side chains.. Its pathway is protein modification; lipoprotein biosynthesis (signal peptide cleavage). Its function is as follows. This protein specifically catalyzes the removal of signal peptides from prolipoproteins. This is Lipoprotein signal peptidase from Lactococcus lactis subsp. cremoris (strain SK11).